Consider the following 399-residue polypeptide: MSEKHLFTSESVSEGHPDKVADQISDAILDAILAQDPHAHVACETVVYTGTVNVFGEISTSAYVDIAHVVRETIKKIGYTDSENGFDYKSVGVHVSLVEQSSDIAQGVNEAEEVRDKNGQLVDPLDLIGAGDQGMMFGFATNETAEYMPLAISLSHKLVKKLADLRKSGEISYLRPDAKSQVTVEYDDNGKAKRIDTVVISTQHAASARNEEIHDDVINKVIKAVIPAELLDDETKYFINPTGRFVIGGPQGDSGLTGRKIIVDTYGGYAPHGGGAFSGKDATKVDRSASYAARYVAKNIVAAGLAEKAQIQLSYAIGVATPTSINVDTFGTGKVSDDELLAAIRKVFDLRPAGIIQMLDLLRPIYGQTAAYGHFGRTDVELPWEQTDKVEELKSVLGK.

An ATP-binding site is contributed by histidine 16. Aspartate 18 contributes to the Mg(2+) binding site. Glutamate 44 provides a ligand contact to K(+). 2 residues coordinate L-methionine: glutamate 57 and glutamine 100. The interval 100-110 is flexible loop; that stretch reads QSSDIAQGVNE. Residues 177–179, 244–245, aspartate 253, 259–260, alanine 276, and lysine 280 contribute to the ATP site; these read DAK, RF, and RK. Aspartate 253 provides a ligand contact to L-methionine. Position 284 (lysine 284) interacts with L-methionine.

It belongs to the AdoMet synthase family. Homotetramer; dimer of dimers. It depends on Mg(2+) as a cofactor. Requires K(+) as cofactor.

Its subcellular location is the cytoplasm. It catalyses the reaction L-methionine + ATP + H2O = S-adenosyl-L-methionine + phosphate + diphosphate. Its pathway is amino-acid biosynthesis; S-adenosyl-L-methionine biosynthesis; S-adenosyl-L-methionine from L-methionine: step 1/1. Its function is as follows. Catalyzes the formation of S-adenosylmethionine (AdoMet) from methionine and ATP. The overall synthetic reaction is composed of two sequential steps, AdoMet formation and the subsequent tripolyphosphate hydrolysis which occurs prior to release of AdoMet from the enzyme. The sequence is that of S-adenosylmethionine synthase from Lactococcus lactis subsp. lactis (strain IL1403) (Streptococcus lactis).